Here is a 163-residue protein sequence, read N- to C-terminus: Nucleotide-binding protein YajQ (163 aa).

This sequence belongs to the YajQ family.

Functionally, nucleotide-binding protein. This Escherichia coli O81 (strain ED1a) protein is Nucleotide-binding protein YajQ.